The primary structure comprises 407 residues: Peptidase T (407 aa).

H82 is a binding site for Zn(2+). D84 is a catalytic residue. D143 is a binding site for Zn(2+). Catalysis depends on E177, which acts as the Proton acceptor. Residues E178, D200, and H382 each contribute to the Zn(2+) site.

This sequence belongs to the peptidase M20B family. Zn(2+) serves as cofactor.

It is found in the cytoplasm. It carries out the reaction Release of the N-terminal residue from a tripeptide.. In terms of biological role, cleaves the N-terminal amino acid of tripeptides. This chain is Peptidase T, found in Streptococcus pyogenes serotype M2 (strain MGAS10270).